A 365-amino-acid chain; its full sequence is Aminomethyltransferase (365 aa).

Belongs to the GcvT family. In terms of assembly, the glycine cleavage system is composed of four proteins: P, T, L and H.

The enzyme catalyses N(6)-[(R)-S(8)-aminomethyldihydrolipoyl]-L-lysyl-[protein] + (6S)-5,6,7,8-tetrahydrofolate = N(6)-[(R)-dihydrolipoyl]-L-lysyl-[protein] + (6R)-5,10-methylene-5,6,7,8-tetrahydrofolate + NH4(+). Functionally, the glycine cleavage system catalyzes the degradation of glycine. In Geobacillus thermodenitrificans (strain NG80-2), this protein is Aminomethyltransferase.